We begin with the raw amino-acid sequence, 687 residues long: Histone deacetylase clr3 (687 aa).

The interval 55-385 is histone deacetylase; sequence KKSGLCYDPR…ALAVAQSLLG (331 aa). Residue His195 is part of the active site.

This sequence belongs to the histone deacetylase family. HD type 2 subfamily. In terms of assembly, interacts with ccq1, clr1, clr2 and mit1.

The protein localises to the nucleus. It localises to the chromosome. Its subcellular location is the centromere. The protein resides in the telomere. The enzyme catalyses N(6)-acetyl-L-lysyl-[histone] + H2O = L-lysyl-[histone] + acetate. Its function is as follows. Responsible for the deacetylation of lysine residues on the N-terminal part of the core histones (H2A, H2B, H3 and H4). Histone deacetylation gives a tag for epigenetic repression and plays an important role in transcriptional regulation, cell cycle progression and developmental events. Histone deacetylases act via the formation of large multiprotein complexes. Required for proper positioning of nucleosomes at heterochromatic loci and for transcriptional gene silencing (TGS) function of the Snf2/Hdac-containing repressor complex (SHREC). The protein is Histone deacetylase clr3 (clr3) of Schizosaccharomyces pombe (strain 972 / ATCC 24843) (Fission yeast).